We begin with the raw amino-acid sequence, 944 residues long: MIGYVLKKILGTKNDREIKKIRKWVEKINALEESLDKLSNKDIVLKAQDLYFRVNQNEHIKQAIIEGEMVEELIEAFALVREASKRTMGLRQFDVQLIGGIVLYQGKIAEMKTGEGKTLVAAAPAFFTALTDTGVHVVTVNDYLAKRDATWIGPIYRFLGLDVGVINSDNMSYIIDWQDPEKAMEAIEKDIRVWPKGMVGDAIDYSKIDVHAKTSYFTKAISVERAKAYEAHITYGTNNEFGFDYLRDNLAVSKDQIVQVKGHGYAIVDEIDSILIDEARTPLIIAGPSNLDNKVVLQANEFVQTLEIEKDFIVDEKNRTAMLTEEGIEKAEKYFNIQNLYDIRHIDLVHAINKALLAHNLYKKDVHYMVKDGEILIVDEFTGRALPGRRWSEGLHQAIEAKEGVEIQEENQTLATTAFQNYFKLYKKLAGMTGTAETEALEFKEIYSLDVVVIPTNKPNIRKDLPDAIFKTKKEKWEYIAKVIEENHAKGRPILVGTVSIEDSETLSKLLEQRGIKHNVLNAKQHEKEAWIIAQAGRKGAVTIATNMAGRGTDILLGGNPEFLAREILKQKGIDEDKATEEEWKQAYEEATKITQKEKEEVIKAGGLLVIGTERHESRRVDNQLRGRAGRQGDPGESRFILSLEDDLLRIFGGDRVKKLMEFMKIPEGEPIESSIVSKSLEGAQERVELQNFQSRKRLLEYDEVINIQRSVVYDIRRSILFQDDIKEEIKDFIKDVIHTQVFTLLTEDEPELWELEPLKTFFKEWIDLDLPEKFEAKDREELEEEIFKLVMEKYAQKEQEIGEKTMREIEKVFTLNIIDNLWREQLHTIDKLREGIYLRSYAQRDPLVEFKKEAFRLFEELMLNFKISAIQSIMNAQISKEELEQQEQNMFNLEIDTLNKSMAISEALENIAKEFQEKRPRFRTLKDRLEERKKKLEKKGESA.

ATP-binding positions include Q96, 114 to 118 (GEGKT), and D554.

The protein belongs to the SecA family. Monomer and homodimer. Part of the essential Sec protein translocation apparatus which comprises SecA, SecYEG and auxiliary proteins SecDF. Other proteins may also be involved.

Its subcellular location is the cell inner membrane. It is found in the cytoplasm. It carries out the reaction ATP + H2O + cellular proteinSide 1 = ADP + phosphate + cellular proteinSide 2.. Part of the Sec protein translocase complex. Interacts with the SecYEG preprotein conducting channel. Has a central role in coupling the hydrolysis of ATP to the transfer of proteins into and across the cell membrane, serving as an ATP-driven molecular motor driving the stepwise translocation of polypeptide chains across the membrane. The polypeptide is Protein translocase subunit SecA (Hydrogenobaculum sp. (strain Y04AAS1)).